Consider the following 36-residue polypeptide: U14-myrmicitoxin-Tb1a (36 aa).

Positions 1–23 are cleaved as a signal peptide; it reads MKIIKLITIFTMMATLMXXVANG. Residues 24 to 25 constitute a propeptide that is removed on maturation; sequence EP. Residue Gln-35 is modified to Glutamine amide.

In terms of tissue distribution, expressed by the venom gland.

It localises to the secreted. In terms of biological role, venom protein with unknown function. Does not induce paralysis when a high dose is administered by intrathoracic injection into the blowfly Lucilia caesar. This is U14-myrmicitoxin-Tb1a from Tetramorium bicarinatum (Tramp ant).